A 246-amino-acid chain; its full sequence is MSDTPLIQPANVGEGVYEEGREGYGHIKSYVRRAGRMSSAQENYYAEMMPKIGLVYASQPIDLAAFFGRNNPKVLEIGTGMGETTAKIADANRDIDYLGVEVHVPGVGALCKQIAERELTNLRICQHDAVEVVRDMLPEDSLDGVHVFFPDPWHKARHNKRRLIQSPFVALLASRLKPGGYFHCATDWEEYAHQMLEVLSGEPTLVNSSEGFAPRPDYRPLTKFENRGLRLGHGVWDVIFRKKQLA.

Residues E76, E101, D128, and D151 each coordinate S-adenosyl-L-methionine. D151 is an active-site residue. Substrate is bound at residue K155. Residues 157 to 162 (RHNKRR) form an interaction with RNA region. Substrate contacts are provided by residues D187 and 222–225 (TKFE).

Belongs to the class I-like SAM-binding methyltransferase superfamily. TrmB family.

The enzyme catalyses guanosine(46) in tRNA + S-adenosyl-L-methionine = N(7)-methylguanosine(46) in tRNA + S-adenosyl-L-homocysteine. It functions in the pathway tRNA modification; N(7)-methylguanine-tRNA biosynthesis. In terms of biological role, catalyzes the formation of N(7)-methylguanine at position 46 (m7G46) in tRNA. This chain is tRNA (guanine-N(7)-)-methyltransferase, found in Dechloromonas aromatica (strain RCB).